A 657-amino-acid chain; its full sequence is Probable Xaa-Pro aminopeptidase P (657 aa).

Aspartate 453, aspartate 464, glutamate 562, and glutamate 576 together coordinate Mn(2+).

This sequence belongs to the peptidase M24B family. The cofactor is Mn(2+).

The enzyme catalyses Release of any N-terminal amino acid, including proline, that is linked to proline, even from a dipeptide or tripeptide.. In terms of biological role, catalyzes the removal of a penultimate prolyl residue from the N-termini of peptides. The protein is Probable Xaa-Pro aminopeptidase P (ampp) of Talaromyces stipitatus (strain ATCC 10500 / CBS 375.48 / QM 6759 / NRRL 1006) (Penicillium stipitatum).